The following is a 359-amino-acid chain: MKILSYLKKFYLFLLIGAIMQANESMGAKLPKTDERVIYLAGGCFWGLEAYMERIYGVIDASSGYANGKTSSTNYEKLHESDHAESVKVIYDPKKISLDKLLRYYFKVIDPVSVNKQGNDVGRQYRTGIYYVNSADKEVIDNALKALQKEVKGKIAIEVEPLKNYVRAEEYHQDYLKKHPGGYCHIDLKKADEVIVDDDKYTKPSDEVLKKKLTKLQYEVTQNKHTEKPFENEYYNKEEEGIYVDITTGEPLFSSADKYDSGCGWPSFSKPINKDVVKYEDDESLNRKRIEVLSRIGKAHLGHVFNDGPKELGGLRYCINSAALRFIPLKDMEKEGYGEFIPYIKKGELKKYIQDKKSH.

The peptide methionine sulfoxide reductase A stretch occupies residues 36 to 189 (RVIYLAGGCF…PGGYCHIDLK (154 aa)). C44 is a catalytic residue. Residues 206-329 (DEVLKKKLTK…NSAALRFIPL (124 aa)) form the MsrB domain. The active-site Nucleophile is the C318.

This sequence in the N-terminal section; belongs to the MsrA Met sulfoxide reductase family. It in the C-terminal section; belongs to the MsrB Met sulfoxide reductase family.

The catalysed reaction is L-methionyl-[protein] + [thioredoxin]-disulfide + H2O = L-methionyl-(S)-S-oxide-[protein] + [thioredoxin]-dithiol. It catalyses the reaction [thioredoxin]-disulfide + L-methionine + H2O = L-methionine (S)-S-oxide + [thioredoxin]-dithiol. The enzyme catalyses L-methionyl-[protein] + [thioredoxin]-disulfide + H2O = L-methionyl-(R)-S-oxide-[protein] + [thioredoxin]-dithiol. Its function is as follows. Has an important function as a repair enzyme for proteins that have been inactivated by oxidation. Catalyzes the reversible oxidation-reduction of methionine sulfoxide in proteins to methionine. The polypeptide is Peptide methionine sulfoxide reductase MsrA/MsrB (msrAB) (Helicobacter pylori (strain J99 / ATCC 700824) (Campylobacter pylori J99)).